The following is a 201-amino-acid chain: Ribonuclease HII (201 aa).

Positions 12 to 201 (DLVAGVDEVG…VRELLDVPVQ (190 aa)) constitute an RNase H type-2 domain. A divalent metal cation contacts are provided by aspartate 18, glutamate 19, and aspartate 110.

This sequence belongs to the RNase HII family. Requires Mn(2+) as cofactor. Mg(2+) serves as cofactor.

It localises to the cytoplasm. The enzyme catalyses Endonucleolytic cleavage to 5'-phosphomonoester.. Endonuclease that specifically degrades the RNA of RNA-DNA hybrids. This chain is Ribonuclease HII, found in Pseudomonas aeruginosa (strain UCBPP-PA14).